Here is a 271-residue protein sequence, read N- to C-terminus: Undecaprenyl-diphosphatase (271 aa).

Transmembrane regions (helical) follow at residues 5–25, 43–63, 80–100, 109–129, 145–165, 186–206, 215–235, and 246–266; these read LLIKAFIMGIVEGLTEFLPIS, FATMFEIVIQLGAILAVVYYF, GFNLWYKTFIAFLPAAIIGIL, LFSPFTVAIALIVGAIMMIVI, VSTSKAFWIGVAQVMSLFPGM, AEFSFFLAIPTMLAATGFELV, LEWEALAVGFIMSFITALIVV, and VLKPFAYYRLLVGVLMLFLIA.

The protein belongs to the UppP family.

It localises to the cell membrane. The enzyme catalyses di-trans,octa-cis-undecaprenyl diphosphate + H2O = di-trans,octa-cis-undecaprenyl phosphate + phosphate + H(+). Its function is as follows. Catalyzes the dephosphorylation of undecaprenyl diphosphate (UPP). Confers resistance to bacitracin. The protein is Undecaprenyl-diphosphatase of Caldanaerobacter subterraneus subsp. tengcongensis (strain DSM 15242 / JCM 11007 / NBRC 100824 / MB4) (Thermoanaerobacter tengcongensis).